A 171-amino-acid polypeptide reads, in one-letter code: Large ribosomal subunit protein uL10 (171 aa).

Belongs to the universal ribosomal protein uL10 family. In terms of assembly, part of the ribosomal stalk of the 50S ribosomal subunit. The N-terminus interacts with L11 and the large rRNA to form the base of the stalk. The C-terminus forms an elongated spine to which L12 dimers bind in a sequential fashion forming a multimeric L10(L12)X complex.

In terms of biological role, forms part of the ribosomal stalk, playing a central role in the interaction of the ribosome with GTP-bound translation factors. The sequence is that of Large ribosomal subunit protein uL10 from Sphingopyxis alaskensis (strain DSM 13593 / LMG 18877 / RB2256) (Sphingomonas alaskensis).